Consider the following 639-residue polypeptide: Threonine--tRNA ligase (639 aa).

The 62-residue stretch at 1 to 62 (MYQLTLPDKS…ETDANIEVLT (62 aa)) folds into the TGS domain. The tract at residues 246–537 (DHRKIGKELD…LIEHYEGKFP (292 aa)) is catalytic. Zn(2+) contacts are provided by C337, H388, and H514.

The protein belongs to the class-II aminoacyl-tRNA synthetase family. In terms of assembly, homodimer. Requires Zn(2+) as cofactor.

Its subcellular location is the cytoplasm. It catalyses the reaction tRNA(Thr) + L-threonine + ATP = L-threonyl-tRNA(Thr) + AMP + diphosphate + H(+). Catalyzes the attachment of threonine to tRNA(Thr) in a two-step reaction: L-threonine is first activated by ATP to form Thr-AMP and then transferred to the acceptor end of tRNA(Thr). Also edits incorrectly charged L-seryl-tRNA(Thr). This chain is Threonine--tRNA ligase, found in Leptospira borgpetersenii serovar Hardjo-bovis (strain JB197).